A 549-amino-acid chain; its full sequence is Hydroxylamine reductase (549 aa).

The [4Fe-4S] cluster site is built by Cys3, Cys6, Cys15, and Cys21. Hybrid [4Fe-2O-2S] cluster contacts are provided by His244, Glu268, Cys313, Cys405, Cys433, Cys458, Glu492, and Lys494. Cysteine persulfide is present on Cys405.

Belongs to the HCP family. The cofactor is [4Fe-4S] cluster. Hybrid [4Fe-2O-2S] cluster serves as cofactor.

The protein resides in the cytoplasm. The enzyme catalyses A + NH4(+) + H2O = hydroxylamine + AH2 + H(+). Functionally, catalyzes the reduction of hydroxylamine to form NH(3) and H(2)O. The sequence is that of Hydroxylamine reductase from Gloeothece citriformis (strain PCC 7424) (Cyanothece sp. (strain PCC 7424)).